Reading from the N-terminus, the 216-residue chain is uncharacterized protein (216 aa).

The next 6 helical transmembrane spans lie at 12–32, 48–68, 74–94, 134–154, 156–176, and 191–211; these read YVLGVVFVILLPGPNSLFVLA, GVFLGDAVLMLLSALGVASLL, LFIGLKYLGAAYLFYLGVGML, ILFFISFFIQFVDPGYAYPGL, FLVLAVILELVSALYLSFLIF, and LAAGATSGVGALFVGFGVKLA.

The protein belongs to the Rht family.

Its subcellular location is the cell membrane. This is an uncharacterized protein from Pseudomonas aeruginosa (strain ATCC 15692 / DSM 22644 / CIP 104116 / JCM 14847 / LMG 12228 / 1C / PRS 101 / PAO1).